We begin with the raw amino-acid sequence, 141 residues long: Sec-independent protein translocase protein TatB (141 aa).

The chain crosses the membrane as a helical span at residues 2–22 (FANVGWGEMLVLVIAGLVILG). A disordered region spans residues 92-141 (IFTGRFDSTSSDQPGSGKPPKPQSGPGPAAASGPAATTTPASTPFDPDAT). The span at 117–141 (PGPAAASGPAATTTPASTPFDPDAT) shows a compositional bias: low complexity.

This sequence belongs to the TatB family. As to quaternary structure, the Tat system comprises two distinct complexes: a TatABC complex, containing multiple copies of TatA, TatB and TatC subunits, and a separate TatA complex, containing only TatA subunits. Substrates initially bind to the TatABC complex, which probably triggers association of the separate TatA complex to form the active translocon.

It is found in the cell membrane. In terms of biological role, part of the twin-arginine translocation (Tat) system that transports large folded proteins containing a characteristic twin-arginine motif in their signal peptide across membranes. Together with TatC, TatB is part of a receptor directly interacting with Tat signal peptides. TatB may form an oligomeric binding site that transiently accommodates folded Tat precursor proteins before their translocation. This is Sec-independent protein translocase protein TatB from Mycolicibacterium gilvum (strain PYR-GCK) (Mycobacterium gilvum (strain PYR-GCK)).